Reading from the N-terminus, the 949-residue chain is Glycine dehydrogenase (decarboxylating) (949 aa).

At Lys697 the chain carries N6-(pyridoxal phosphate)lysine.

It belongs to the GcvP family. As to quaternary structure, the glycine cleavage system is composed of four proteins: P, T, L and H. Pyridoxal 5'-phosphate serves as cofactor.

It carries out the reaction N(6)-[(R)-lipoyl]-L-lysyl-[glycine-cleavage complex H protein] + glycine + H(+) = N(6)-[(R)-S(8)-aminomethyldihydrolipoyl]-L-lysyl-[glycine-cleavage complex H protein] + CO2. Functionally, the glycine cleavage system catalyzes the degradation of glycine. The P protein binds the alpha-amino group of glycine through its pyridoxal phosphate cofactor; CO(2) is released and the remaining methylamine moiety is then transferred to the lipoamide cofactor of the H protein. The sequence is that of Glycine dehydrogenase (decarboxylating) from Deinococcus radiodurans (strain ATCC 13939 / DSM 20539 / JCM 16871 / CCUG 27074 / LMG 4051 / NBRC 15346 / NCIMB 9279 / VKM B-1422 / R1).